Here is an 81-residue protein sequence, read N- to C-terminus: Acyl carrier protein 2 (81 aa).

The region spanning 1-79 (MTETEILERI…DVIGAVQSLL (79 aa)) is the Carrier domain. At Ser39 the chain carries O-(pantetheine 4'-phosphoryl)serine.

This sequence belongs to the acyl carrier protein (ACP) family. In terms of processing, 4'-phosphopantetheine is transferred from CoA to a specific serine of apo-ACP by AcpS. This modification is essential for activity because fatty acids are bound in thioester linkage to the sulfhydryl of the prosthetic group.

It is found in the cytoplasm. Its pathway is lipid metabolism; fatty acid biosynthesis. In terms of biological role, carrier of the growing fatty acid chain in fatty acid biosynthesis. The polypeptide is Acyl carrier protein 2 (Ralstonia nicotianae (strain ATCC BAA-1114 / GMI1000) (Ralstonia solanacearum)).